The primary structure comprises 92 residues: Small ribosomal subunit protein uS19 (92 aa).

Belongs to the universal ribosomal protein uS19 family.

In terms of biological role, protein S19 forms a complex with S13 that binds strongly to the 16S ribosomal RNA. In Staphylococcus epidermidis (strain ATCC 35984 / DSM 28319 / BCRC 17069 / CCUG 31568 / BM 3577 / RP62A), this protein is Small ribosomal subunit protein uS19.